We begin with the raw amino-acid sequence, 385 residues long: Period circadian protein (385 aa).

Disordered regions lie at residues 28–121 (TAPV…VPPV), 169–189 (GPGPGHGHGIKRGGSHSWEGE), and 322–351 (SPASGTSPNPRPHKHTHVHPSSEQPSTSQG). Residues 71-93 (SGNFTTGSNLHMSSVTNTSNAGT) are compositionally biased toward low complexity. The span at 94–115 (GTSGTGNSGDGGGGGAGDGPGS) shows a compositional bias: gly residues. Residues 340–351 (HPSSEQPSTSQG) show a composition bias toward polar residues.

As to quaternary structure, forms a heterodimer with timeless (TIM); the complex then translocates into the nucleus. Post-translationally, phosphorylated with a circadian rhythmicity, probably by the double-time protein (dbt). Phosphorylation could be implicated in the stability of per monomer and in the formation of heterodimer per-tim.

Its subcellular location is the nucleus. The protein localises to the cytoplasm. The protein resides in the perinuclear region. Its function is as follows. Essential for biological clock functions. Determines the period length of circadian and ultradian rhythms; an increase in PER dosage leads to shortened circadian rhythms and a decrease leads to lengthened circadian rhythms. Essential for the circadian rhythmicity of locomotor activity, eclosion behavior, and for the rhythmic component of the male courtship song that originates in the thoracic nervous system. The biological cycle depends on the rhythmic formation and nuclear localization of the TIM-PER complex. Light induces the degradation of TIM, which promotes elimination of PER. Nuclear activity of the heterodimer coordinatively regulates PER and TIM transcription through a negative feedback loop. Behaves as a negative element in circadian transcriptional loop. Does not appear to bind DNA, suggesting indirect transcriptional inhibition. The sequence is that of Period circadian protein (per) from Drosophila nebulosa (Fruit fly).